Consider the following 363-residue polypeptide: Capsid protein (363 aa).

Residues 72–111 (KKVEELNESLKAAILAGAEAEDLRNKLKDISQRYASQLEI) are a coiled coil. A disordered region spans residues 122–144 (LKKKGHEQPLTGSGSSEPVHAES).

The protein resides in the virion. This chain is Capsid protein, found in Citrus leaf blotch virus (isolate Nagami kumquat/France/SRA-153/1984) (CLBV).